The following is a 600-amino-acid chain: MSMRTEYCGLVTEHLLGQTVSLCGWVQRRRDHGGVIFIDLRDREGLVQVVCDPDRAEMFATAEGVRNEFCVQIKGLVRNRPEGTVNAGLKSGKIEVLCHELNVLNASVTPPFQLDDDNLSETTRLTHRVLDLRRPQMQHNLRLRYRVAIEARKYLDEQGFIDIETPMLTKSTPEGARDYLVPSRVNAGQFFALPQSPQLFKQLLMVANFDRYYQITKCFRDEDLRADRQPEFTQIDCETSFLGEQEIRDLFEDMIRHIFKTTIDVELDAKFPVMPYSEAMARFGSDKPDLRVQLEFTELTDAMKDVDFKVFSTPANAKDGRVAALRVPKGGELSRGDIDGYTEFVRIYGAKGLAWIKVNEKAKGRDGLQSPIVKNLHDASIAAILERTGAEDGDIIFFAADRAKVVNDSLGALRLKIGHSEFGKANGLVQAGWKPLWVVDFPMFEYDDEDARYVAAHHPFTSPKDEHLEYLETDPGRCLAKAYDMVLNGWEIGGGSVRIHREEVQSKVFRALKIGAEEAQLKFGFLLDALQYGAPPHGGIAFGLDRIVTMMAGADSIRDVIAFPKTQRAQDLLTQAPSPVDERQLRELHIRLRQPEQPKA.

E174 contributes to the L-aspartate binding site. Residues 198–201 are aspartate; the sequence is QLFK. R220 is a binding site for L-aspartate. Residues 220-222 and Q229 contribute to the ATP site; that span reads RDE. L-aspartate is bound at residue H457. E491 contributes to the ATP binding site. Residue R498 participates in L-aspartate binding. ATP is bound at residue 543-546; it reads GLDR.

This sequence belongs to the class-II aminoacyl-tRNA synthetase family. Type 1 subfamily. Homodimer.

It is found in the cytoplasm. The enzyme catalyses tRNA(Asx) + L-aspartate + ATP = L-aspartyl-tRNA(Asx) + AMP + diphosphate. Aspartyl-tRNA synthetase with relaxed tRNA specificity since it is able to aspartylate not only its cognate tRNA(Asp) but also tRNA(Asn). Reaction proceeds in two steps: L-aspartate is first activated by ATP to form Asp-AMP and then transferred to the acceptor end of tRNA(Asp/Asn). The chain is Aspartate--tRNA(Asp/Asn) ligase from Burkholderia orbicola (strain MC0-3).